The sequence spans 312 residues: Ribonuclease Z (312 aa).

Positions 63, 65, 67, 68, 141, 212, and 270 each coordinate Zn(2+). Asp-67 (proton acceptor) is an active-site residue.

Belongs to the RNase Z family. Homodimer. Zn(2+) is required as a cofactor.

It carries out the reaction Endonucleolytic cleavage of RNA, removing extra 3' nucleotides from tRNA precursor, generating 3' termini of tRNAs. A 3'-hydroxy group is left at the tRNA terminus and a 5'-phosphoryl group is left at the trailer molecule.. Functionally, zinc phosphodiesterase, which displays some tRNA 3'-processing endonuclease activity. Probably involved in tRNA maturation, by removing a 3'-trailer from precursor tRNA. This chain is Ribonuclease Z, found in Lactobacillus acidophilus (strain ATCC 700396 / NCK56 / N2 / NCFM).